The primary structure comprises 260 residues: Trialysin (260 aa).

An N-terminal signal peptide occupies residues 1-19 (MSKFWLLLLLVAAFQFAHS). A propeptide spans 20–55 (YPAAEYELDETTNDEVRQFIGDGYFEDEGDDGDEER) (removed in mature form, probably by the serine protease triapsin).

Belongs to the redulysin-like family. In terms of tissue distribution, expressed in salivary glands.

It is found in the secreted. The protein localises to the target cell membrane. Pore-forming protein that induces lysis of T.cruzi trypomastigotes, bacteria E.coli and human red blood cells. The parasite lysis is much more important than the hemolysis, probably due to difference in membrane composition. Its action on protozoan parasites and bacteria may indicate a role in the control of microorganism growth in the salivary glands. The sequence is that of Trialysin from Triatoma infestans (Assassin bug).